The primary structure comprises 285 residues: HTH-type transcriptional regulator MurR (285 aa).

Residues 1 to 77 (MLYLTKIRNA…MALIGEYSAS (77 aa)) enclose the HTH rpiR-type domain. A DNA-binding region (H-T-H motif) is located at residues 37–56 (SRQMAKQLGISQSSIVKFAQ). Positions 128 to 268 (IIEVISKAPF…FVGLVQLNDV (141 aa)) constitute an SIS domain.

Homotetramer.

Its pathway is amino-sugar metabolism; N-acetylmuramate degradation [regulation]. Represses the expression of the murPQ operon involved in the uptake and degradation of N-acetylmuramic acid (MurNAc). Binds to two adjacent inverted repeats within the operator region. MurNAc 6-phosphate, the substrate of MurQ, is the specific inducer that weakens binding of MurR to the operator. This Escherichia coli (strain ATCC 8739 / DSM 1576 / NBRC 3972 / NCIMB 8545 / WDCM 00012 / Crooks) protein is HTH-type transcriptional regulator MurR.